A 457-amino-acid polypeptide reads, in one-letter code: Multidrug resistance protein MdtK (457 aa).

A run of 12 helical transmembrane segments spans residues 11 to 31 (LLAL…MGFV), 53 to 73 (IWLP…PVIA), 93 to 113 (WLAG…GYII), 127 to 147 (AVGY…FQVA), 160 to 180 (GMVM…IFIY), 189 to 209 (GGVG…LAMV), 243 to 263 (LPIA…ALLV), 276 to 296 (IALN…AAVT), 314 to 334 (AART…IFTV), 350 to 370 (VVTL…SDSI), 387 to 407 (IFYI…YILA), and 418 to 438 (PAGF…MMML).

It belongs to the multi antimicrobial extrusion (MATE) (TC 2.A.66.1) family. MdtK subfamily.

The protein localises to the cell inner membrane. Its function is as follows. Multidrug efflux pump that functions probably as a Na(+)/drug antiporter. The sequence is that of Multidrug resistance protein MdtK from Escherichia coli O9:H4 (strain HS).